A 173-amino-acid chain; its full sequence is C-type lectin mosGCTL-7 (173 aa).

Positions M1 to A24 are cleaved as a signal peptide. Residues N51–E167 enclose the C-type lectin domain. Cystine bridges form between C59-C166 and C139-C158. N-linked (GlcNAc...) asparagine glycans are attached at residues N119 and N144.

In terms of assembly, interacts with putative receptor-type tyrosine-protein phosphatase mosPTP-1; the interaction may mediate the recruitment of Japanese encephalitis virus particles in complex with C-type lectin mosGCTL-7 to the cell surface.

Its subcellular location is the secreted. Functionally, carbohydrate-binding protein. (Microbial infection) Facilitates Japanese encephalitis virus infection in mosquitoes. The sequence is that of C-type lectin mosGCTL-7 from Culex quinquefasciatus (Southern house mosquito).